The chain runs to 209 residues: Small ribosomal subunit protein uS4 (209 aa).

The tract at residues 23–46 is disordered; that stretch reads SRNPLLKKPHPPGQHGMQRKKKSD. An S4 RNA-binding domain is found at 93–156; that stretch reads CRLDNMVYRM…RKLQSVQESL (64 aa).

It belongs to the universal ribosomal protein uS4 family. As to quaternary structure, part of the 30S ribosomal subunit. Contacts protein S5. The interaction surface between S4 and S5 is involved in control of translational fidelity.

One of the primary rRNA binding proteins, it binds directly to 16S rRNA where it nucleates assembly of the body of the 30S subunit. Its function is as follows. With S5 and S12 plays an important role in translational accuracy. The polypeptide is Small ribosomal subunit protein uS4 (Chlamydia caviae (strain ATCC VR-813 / DSM 19441 / 03DC25 / GPIC) (Chlamydophila caviae)).